A 288-amino-acid chain; its full sequence is Mortality factor 4-like protein 2 (288 aa).

A compositionally biased stretch (polar residues) spans 1–15 (MSSRKQASQTRGQQS). The tract at residues 1–115 (MSSRKQASQT…DPTVESEEAF (115 aa)) is disordered. Ser-71 carries the phosphoserine modification. The MRG domain maps to 117–288 (SRMEVKVKIP…ASADYHRKAL (172 aa)).

Component of the NuA4 histone acetyltransferase complex which contains the catalytic subunit KAT5/TIP60 and the subunits EP400, TRRAP/PAF400, BRD8/SMAP, EPC1, DMAP1/DNMAP1, RUVBL1/TIP49, RUVBL2, ING3, actin, ACTL6A/BAF53A, MORF4L1/MRG15, MORF4L2/MRGX, MRGBP, YEATS4/GAS41 and VPS72/YL1. The NuA4 complex interacts with MYC and the adenovirus E1A protein. MORF4L1 may also participate in the formation of NuA4 related complexes which lack the KAT5/TIP60 catalytic subunit, but which include the SWI/SNF related protein SRCAP. Component of the MSIN3A histone deacetylase complex, which includes SIN3A, HDAC2, ARID4B, MORF4L1, RBBP4/RbAp48, and RBBP7/RbAp46. Interacts with MRFAP1 and RB1. May also interact with one or more as yet undefined members of the TLE (transducin-like enhancer of split) family of transcriptional repressors.

Its subcellular location is the nucleus. Its function is as follows. Component of the NuA4 histone acetyltransferase complex which is involved in transcriptional activation of select genes principally by acetylation of nucleosomal histone H4 and H2A. This modification may both alter nucleosome - DNA interactions and promote interaction of the modified histones with other proteins which positively regulate transcription. This complex may be required for the activation of transcriptional programs associated with oncogene and proto-oncogene mediated growth induction, tumor suppressor mediated growth arrest and replicative senescence, apoptosis, and DNA repair. The NuA4 complex ATPase and helicase activities seem to be, at least in part, contributed by the association of RUVBL1 and RUVBL2 with EP400. NuA4 may also play a direct role in DNA repair when directly recruited to sites of DNA damage. Also a component of the MSIN3A complex which acts to repress transcription by deacetylation of nucleosomal histones. This chain is Mortality factor 4-like protein 2 (Morf4l2), found in Rattus norvegicus (Rat).